Here is a 48-residue protein sequence, read N- to C-terminus: Large ribosomal subunit protein bL34c (48 aa).

The disordered stretch occupies residues 18–48 (SGFRSRMATPQGRKTIRNRRKKGRKNLTLRR). Positions 31-48 (KTIRNRRKKGRKNLTLRR) are enriched in basic residues.

The protein belongs to the bacterial ribosomal protein bL34 family.

Its subcellular location is the plastid. The protein resides in the chloroplast. The polypeptide is Large ribosomal subunit protein bL34c (Phaeodactylum tricornutum (strain CCAP 1055/1)).